Here is a 29-residue protein sequence, read N- to C-terminus: MDILTLGWVGLLGLFTYSIAMVVWGRHGM.

The helical transmembrane segment at Ile3–Val23 threads the bilayer.

Belongs to the PetN family. The 4 large subunits of the cytochrome b6-f complex are cytochrome b6, subunit IV (17 kDa polypeptide, PetD), cytochrome f and the Rieske protein, while the 4 small subunits are PetG, PetL, PetM and PetN. The complex functions as a dimer.

It localises to the cellular thylakoid membrane. Functionally, component of the cytochrome b6-f complex, which mediates electron transfer between photosystem II (PSII) and photosystem I (PSI), cyclic electron flow around PSI, and state transitions. The sequence is that of Cytochrome b6-f complex subunit 8 from Cyanothece sp. (strain PCC 7425 / ATCC 29141).